The primary structure comprises 336 residues: MKTRHLVYLAFALLGLGLAGLLEDWGLLPQSPSLLSLNRLYLALAGLLTGLLLGPRLEGALEARLKRLRSLPPEVVVATTLGSTIGLLLAVLLTTLLAQVPGFSPVHSLLLALGLVALFVYLALGYRAYFRLPEPKPAPRGGKVLDTSVLVDGRVAEVAAVGFLEGPLWVPHFVLKELQHFADSQDPLRRAKGRRGLETLERLREAAPLEVLETTPKGESVDEKLLFLARDLEAALVTNDHALLQMARIYGVKALSIQALAQALRPQLQVGDTLKLLILKEGKEPHQGVGYLEDGSMVVVDGGSRYRGQEIEVVVTQAIQTQVGRLFFARPAQGAQ.

A signal peptide spans 1-23 (MKTRHLVYLAFALLGLGLAGLLE). 3 helical membrane-spanning segments follow: residues 34–54 (LLSL…LLLG), 75–95 (VVVA…LLTT), and 106–126 (VHSL…ALGY). Positions 144-255 (VLDTSVLVDG…MARIYGVKAL (112 aa)) constitute a PINc domain. D222 is a binding site for Mg(2+). Positions 267 to 328 (QLQVGDTLKL…IQTQVGRLFF (62 aa)) constitute a TRAM domain.

The protein belongs to the PINc/VapC protein family. It depends on Mg(2+) as a cofactor.

The protein resides in the membrane. In terms of biological role, part of a toxin-antitoxin (TA) system. An RNase. This is an uncharacterized protein from Thermus thermophilus (strain ATCC 27634 / DSM 579 / HB8).